Reading from the N-terminus, the 379-residue chain is Homoserine O-succinyltransferase (379 aa).

In terms of domain architecture, AB hydrolase-1 spans 51 to 360 (NAVLICHALS…DAPQGHDAFL (310 aa)). The Nucleophile role is filled by S157. R227 contributes to the substrate binding site. Residues D323 and H356 contribute to the active site. Residue D357 participates in substrate binding.

It belongs to the AB hydrolase superfamily. MetX family. Homodimer.

The protein localises to the cytoplasm. It catalyses the reaction L-homoserine + succinyl-CoA = O-succinyl-L-homoserine + CoA. It participates in amino-acid biosynthesis; L-methionine biosynthesis via de novo pathway; O-succinyl-L-homoserine from L-homoserine: step 1/1. Functionally, transfers a succinyl group from succinyl-CoA to L-homoserine, forming succinyl-L-homoserine. This Stutzerimonas stutzeri (strain A1501) (Pseudomonas stutzeri) protein is Homoserine O-succinyltransferase.